The following is a 209-amino-acid chain: Ribulose-phosphate 3-epimerase (209 aa).

A substrate-binding site is contributed by serine 8. Positions 33, 35, 64, and 170 each coordinate a divalent metal cation. Aspartate 35 serves as the catalytic Proton acceptor. Substrate is bound by residues histidine 64, 170–172 (DGG), and 191–192 (GS). The active-site Proton donor is aspartate 170.

The protein belongs to the ribulose-phosphate 3-epimerase family. The cofactor is a divalent metal cation.

It catalyses the reaction D-ribulose 5-phosphate = D-xylulose 5-phosphate. It functions in the pathway carbohydrate degradation. In terms of biological role, catalyzes the reversible epimerization of D-ribulose 5-phosphate to D-xylulose 5-phosphate. This Mycoplasma genitalium (strain ATCC 33530 / DSM 19775 / NCTC 10195 / G37) (Mycoplasmoides genitalium) protein is Ribulose-phosphate 3-epimerase.